Consider the following 220-residue polypeptide: Ribosomal RNA small subunit methyltransferase G (220 aa).

S-adenosyl-L-methionine-binding positions include glycine 78, phenylalanine 83, 129–130, and arginine 146; that span reads GE.

It belongs to the methyltransferase superfamily. RNA methyltransferase RsmG family.

It localises to the cytoplasm. The enzyme catalyses guanosine(527) in 16S rRNA + S-adenosyl-L-methionine = N(7)-methylguanosine(527) in 16S rRNA + S-adenosyl-L-homocysteine. Specifically methylates the N7 position of guanine in position 527 of 16S rRNA. This Geobacter metallireducens (strain ATCC 53774 / DSM 7210 / GS-15) protein is Ribosomal RNA small subunit methyltransferase G.